The chain runs to 393 residues: tRNA(Met) cytidine acetate ligase (393 aa).

Residues G81, N142, and R167 each coordinate ATP.

This sequence belongs to the TmcAL family.

It localises to the cytoplasm. It carries out the reaction cytidine(34) in elongator tRNA(Met) + acetate + ATP = N(4)-acetylcytidine(34) in elongator tRNA(Met) + AMP + diphosphate. In terms of biological role, catalyzes the formation of N(4)-acetylcytidine (ac(4)C) at the wobble position of elongator tRNA(Met), using acetate and ATP as substrates. First activates an acetate ion to form acetyladenylate (Ac-AMP) and then transfers the acetyl group to tRNA to form ac(4)C34. The protein is tRNA(Met) cytidine acetate ligase of Bacillus mycoides (strain KBAB4) (Bacillus weihenstephanensis).